The sequence spans 597 residues: TOX high mobility group box family member 4 (597 aa).

2 disordered regions span residues 160–224 and 520–546; these read GAIL…EPQK and VQEE…SPQP. The span at 207–217 shows a compositional bias: basic residues; that stretch reads KPKTPKKKKKK. The Nuclear localization signal signature appears at 212-217; sequence KKKKKK. The HMG box DNA-binding region spans 222 to 290; the sequence is PQKPLSAYAL…EYLKALALYK (69 aa).

In terms of assembly, component of the PNUTS-PP1 phosphatase complex.

It localises to the nucleus. The protein resides in the chromosome. Its function is as follows. Transcription factor that modulates cell fate reprogramming from the somatic state to the pluripotent and neuronal fate. Also acts as a regulatory component of protein phosphatase 1 (PP1) complexes. Component of the PNUTS-PP1 protein phosphatase complex, a PP1 complex that regulates RNA polymerase II transcription pause-release. PNUTS-PP1 also plays a role in the control of chromatin structure and cell cycle progression during the transition from mitosis into interphase. This Xenopus tropicalis (Western clawed frog) protein is TOX high mobility group box family member 4 (tox4).